A 66-amino-acid chain; its full sequence is Moricin-1 (66 aa).

The signal sequence occupies residues 1-24; sequence MNILKFFFVFIVAMSLVSCSTAAP.

As to expression, expressed in fat body and to a lesser extent in hemocyte and Malpighian tubules.

The protein resides in the secreted. Functionally, has antibacterial activity against Gram-positive and Gram-negative bacteria. Probably acts by disturbing membrane functions with its amphipathic structure. This Bombyx mori (Silk moth) protein is Moricin-1 (MOR1).